We begin with the raw amino-acid sequence, 421 residues long: Acylglycerol kinase, mitochondrial (421 aa).

N6-acetyllysine is present on Lys6. The interval 15 to 31 (TTAGLCLLTWGGHWLYG) is hydrophobic. Residues 58–199 (AQVKKATVFL…LDVLQIKGEK (142 aa)) form the DAGKc domain. The disordered stretch occupies residues 252–271 (ISYTGPRERPPIEPEETPPR).

It belongs to the AGK family. In terms of assembly, component of the TIM22 complex, which core is composed of TIMM22, associated with TIMM10 (TIMM10A and/or TIMM10B), TIMM9, AGK and TIMM29. Interacts with SMIM26. Mg(2+) serves as cofactor. Ubiquitously expressed.

Its subcellular location is the mitochondrion inner membrane. The protein resides in the mitochondrion intermembrane space. The catalysed reaction is a monoacylglycerol + ATP = a monoacyl-sn-glycero-3-phosphate + ADP + H(+). It catalyses the reaction a 1,2-diacyl-sn-glycerol + ATP = a 1,2-diacyl-sn-glycero-3-phosphate + ADP + H(+). The enzyme catalyses an N-acylsphing-4-enine + ATP = an N-acylsphing-4-enine 1-phosphate + ADP + H(+). It carries out the reaction 1,2-di-(9Z-octadecenoyl)-sn-glycerol + ATP = 1,2-di-(9Z-octadecenoyl)-sn-glycero-3-phosphate + ADP + H(+). The catalysed reaction is 1-(9Z-octadecenoyl)-sn-glycerol + ATP = 1-(9Z-octadecenoyl)-sn-glycero-3-phosphate + ADP + H(+). It catalyses the reaction 1-(5Z,8Z,11Z,14Z-eicosatetraenoyl)-sn-glycerol + ATP = 1-(5Z,8Z,11Z,14Z-eicosatetraenoyl)-sn-glycero-3-phosphate + ADP + H(+). The enzyme catalyses a 1-acyl-sn-glycerol + ATP = a 1-acyl-sn-glycero-3-phosphate + ADP + H(+). It carries out the reaction 1-hexadecanoyl-sn-glycerol + ATP = 1-hexadecanoyl-sn-glycero-3-phosphate + ADP + H(+). The catalysed reaction is a 2-acylglycerol + ATP = a 2-acyl-sn-glycerol 3-phosphate + ADP + H(+). It catalyses the reaction 2-(5Z,8Z,11Z,14Z-eicosatetraenoyl)-glycerol + ATP = 2-(5Z,8Z,11Z,14Z-eicosatetraenoyl)-sn-glycero-3-phosphate + ADP + H(+). The enzyme catalyses N-(hexanoyl)sphing-4-enine + ATP = N-hexanoylsphing-4-enine 1-phosphate + ADP + H(+). It functions in the pathway lipid metabolism; glycerolipid metabolism. Its activity is regulated as follows. Both the ceramide and diacylglycerol kinase activities are inhibited by sphingosine and stimulated by cardiolipin. Both activities are stimulated by calcium when magnesium concentrations are low but inhibited by calcium when magnesium concentrations are high. In terms of biological role, lipid kinase that can phosphorylate both monoacylglycerol and diacylglycerol to form lysophosphatidic acid (LPA) and phosphatidic acid (PA), respectively. Phosphorylates ceramide but not sphingosine. Phosphorylates 1,2-dioleoylglycerol more rapidly than 2,3-dioleoylglycerol. Independently of its lipid kinase activity, acts as a component of the TIM22 complex. The TIM22 complex mediates the import and insertion of multi-pass transmembrane proteins into the mitochondrial inner membrane by forming a twin-pore translocase that uses the membrane potential as the external driving force. In the TIM22 complex, required for the import of a subset of metabolite carriers into mitochondria, such as ANT1/SLC25A4 and SLC25A24, while it is not required for the import of TIMM23. Overexpression increases the formation and secretion of LPA, resulting in transactivation of EGFR and activation of the downstream MAPK signaling pathway, leading to increased cell growth. The polypeptide is Acylglycerol kinase, mitochondrial (Mus musculus (Mouse)).